The sequence spans 282 residues: Large ribosomal subunit protein uL4c (282 aa).

The N-terminal 43 residues, 1–43, are a transit peptide targeting the chloroplast; the sequence is MAASLSFFSSSIFLSNPNIQSSKHLLFRSPKQLSVAAIATIRS. Disordered regions lie at residues 86–133 and 251–282; these read RNQR…GGVV and RYGD…ESSE. The segment covering 255–282 has biased composition (acidic residues); the sequence is ENEWEDEEEDDQEDNDGGEAEESTESSE.

This sequence belongs to the universal ribosomal protein uL4 family. In terms of assembly, part of the 50S ribosomal subunit.

It is found in the plastid. Its subcellular location is the chloroplast. Functionally, this protein binds directly and specifically to 23S rRNA. May play a role in plastid transcriptional regulation. This is Large ribosomal subunit protein uL4c (RPL4) from Nicotiana tabacum (Common tobacco).